Consider the following 140-residue polypeptide: Large ribosomal subunit protein uL14 (140 aa).

It belongs to the universal ribosomal protein uL14 family. Component of the large ribosomal subunit.

It localises to the cytoplasm. Component of the large ribosomal subunit. The ribosome is a large ribonucleoprotein complex responsible for the synthesis of proteins in the cell. This chain is Large ribosomal subunit protein uL14 (rpl23), found in Danio rerio (Zebrafish).